A 228-amino-acid polypeptide reads, in one-letter code: Phosphatidylserine decarboxylase proenzyme (228 aa).

The Schiff-base intermediate with substrate; via pyruvic acid role is filled by Ser-197. Ser-197 is subject to Pyruvic acid (Ser); by autocatalysis.

It belongs to the phosphatidylserine decarboxylase family. PSD-A subfamily. As to quaternary structure, heterodimer of a large membrane-associated beta subunit and a small pyruvoyl-containing alpha subunit. Requires pyruvate as cofactor. Post-translationally, is synthesized initially as an inactive proenzyme. Formation of the active enzyme involves a self-maturation process in which the active site pyruvoyl group is generated from an internal serine residue via an autocatalytic post-translational modification. Two non-identical subunits are generated from the proenzyme in this reaction, and the pyruvate is formed at the N-terminus of the alpha chain, which is derived from the carboxyl end of the proenzyme. The post-translation cleavage follows an unusual pathway, termed non-hydrolytic serinolysis, in which the side chain hydroxyl group of the serine supplies its oxygen atom to form the C-terminus of the beta chain, while the remainder of the serine residue undergoes an oxidative deamination to produce ammonia and the pyruvoyl prosthetic group on the alpha chain.

It is found in the cell membrane. The enzyme catalyses a 1,2-diacyl-sn-glycero-3-phospho-L-serine + H(+) = a 1,2-diacyl-sn-glycero-3-phosphoethanolamine + CO2. Its pathway is phospholipid metabolism; phosphatidylethanolamine biosynthesis; phosphatidylethanolamine from CDP-diacylglycerol: step 2/2. Catalyzes the formation of phosphatidylethanolamine (PtdEtn) from phosphatidylserine (PtdSer). The polypeptide is Phosphatidylserine decarboxylase proenzyme (Bacteroides fragilis (strain ATCC 25285 / DSM 2151 / CCUG 4856 / JCM 11019 / LMG 10263 / NCTC 9343 / Onslow / VPI 2553 / EN-2)).